Here is a 405-residue protein sequence, read N- to C-terminus: Cellobiose 2-epimerase (405 aa).

The protein belongs to the cellobiose 2-epimerase family.

It catalyses the reaction D-cellobiose = beta-D-glucosyl-(1-&gt;4)-D-mannopyranose. Catalyzes the reversible epimerization of cellobiose to 4-O-beta-D-glucopyranosyl-D-mannose (Glc-Man). Can also epimerize lactose to epilactose. The polypeptide is Cellobiose 2-epimerase (ce13) (Eubacterium cellulosolvens).